Consider the following 160-residue polypeptide: Ribosomal RNA large subunit methyltransferase H (160 aa).

S-adenosyl-L-methionine is bound by residues Leu-77, Gly-109, and 128–133 (FSRLTF).

The protein belongs to the RNA methyltransferase RlmH family. In terms of assembly, homodimer.

It is found in the cytoplasm. It carries out the reaction pseudouridine(1915) in 23S rRNA + S-adenosyl-L-methionine = N(3)-methylpseudouridine(1915) in 23S rRNA + S-adenosyl-L-homocysteine + H(+). Its function is as follows. Specifically methylates the pseudouridine at position 1915 (m3Psi1915) in 23S rRNA. This Desulfitobacterium hafniense (strain Y51) protein is Ribosomal RNA large subunit methyltransferase H.